A 402-amino-acid polypeptide reads, in one-letter code: MSFEGGHGGSRCRGAESGDAEPPPQPPPPPPPTPPPGEPAPVPAAPRYLPPLPASPETPERAAGPSEPLGEVAPRCRGADELPPPPLPLQPAGQEVAAAGDSGEGPRRLPEAAAAKGGPGESEAGAGGERERRGAGDQPETRSVCSSRSSSSGGGDQRAGHQHQHHQPICKICFQGAEQGELLNPCRCDGSVRYTHQLCLLKWISERGSWTCELCCYRYHVIAIKMKQPCQWQSISITLVEKVQMIAVILGSLFLIASVTWLLWSAFSPYAVWQRKDILFQICYGMYGFMDLVCIGLIVHEGAAVYRVFKRWRAVNLHWDVLNYDKATDIEESSRGESSTSRTLWLPLTALRNRNLVHPTQLTSPRFQCGYVLLHLFNRMRPHEDLSEDNSSGEVVMRVTSV.

The segment covering 1–11 has biased composition (gly residues); that stretch reads MSFEGGHGGSR. The disordered stretch occupies residues 1 to 161; that stretch reads MSFEGGHGGS…SGGGDQRAGH (161 aa). Residues 21-56 are compositionally biased toward pro residues; it reads EPPPQPPPPPPPTPPPGEPAPVPAAPRYLPPLPASP. The segment covering 111–124 has biased composition (low complexity); it reads EAAAAKGGPGESEA. An RING-CH-type zinc finger spans residues 162 to 222; it reads QHQHHQPICK…ELCCYRYHVI (61 aa). Zn(2+)-binding residues include Cys170, Cys173, Cys186, Cys188, His196, Cys199, Cys212, and Cys215. The next 2 helical transmembrane spans lie at 245–265 and 278–298; these read MIAV…LLWS and ILFQ…IGLI. The YXXL motif motif lies at 371–374; the sequence is YVLL. The short motif at 399–402 is the PDZ-binding element; it reads VTSV.

In terms of assembly, interacts (YXXL motif) with AP1M1. Interacts (via PDZ-binding motif) with LIN7A. Interacts with unidentified fucose glycoproteins.

It is found in the cytoplasmic vesicle membrane. The catalysed reaction is S-ubiquitinyl-[E2 ubiquitin-conjugating enzyme]-L-cysteine + [acceptor protein]-L-lysine = [E2 ubiquitin-conjugating enzyme]-L-cysteine + N(6)-ubiquitinyl-[acceptor protein]-L-lysine.. The protein operates within protein modification; protein ubiquitination. E3 ubiquitin-protein ligase that mediates polyubiquitination of CD4. E3 ubiquitin ligases accept ubiquitin from an E2 ubiquitin-conjugating enzyme in the form of a thioester and then directly transfer the ubiquitin to targeted substrates. May play a role in ubuquitin-dependent protein sorting in developmenting spermatids. This is E3 ubiquitin-protein ligase MARCHF11 from Homo sapiens (Human).